The primary structure comprises 89 residues: Small ribosomal subunit protein uS15 (89 aa).

Belongs to the universal ribosomal protein uS15 family. Part of the 30S ribosomal subunit. Forms a bridge to the 50S subunit in the 70S ribosome, contacting the 23S rRNA.

Functionally, one of the primary rRNA binding proteins, it binds directly to 16S rRNA where it helps nucleate assembly of the platform of the 30S subunit by binding and bridging several RNA helices of the 16S rRNA. Forms an intersubunit bridge (bridge B4) with the 23S rRNA of the 50S subunit in the ribosome. This is Small ribosomal subunit protein uS15 from Thermomicrobium roseum (strain ATCC 27502 / DSM 5159 / P-2).